Here is a 271-residue protein sequence, read N- to C-terminus: Tryptophan synthase alpha chain (271 aa).

Catalysis depends on proton acceptor residues Glu-53 and Asp-64.

This sequence belongs to the TrpA family. As to quaternary structure, tetramer of two alpha and two beta chains.

The enzyme catalyses (1S,2R)-1-C-(indol-3-yl)glycerol 3-phosphate + L-serine = D-glyceraldehyde 3-phosphate + L-tryptophan + H2O. It functions in the pathway amino-acid biosynthesis; L-tryptophan biosynthesis; L-tryptophan from chorismate: step 5/5. Functionally, the alpha subunit is responsible for the aldol cleavage of indoleglycerol phosphate to indole and glyceraldehyde 3-phosphate. The polypeptide is Tryptophan synthase alpha chain (Streptomyces coelicolor (strain ATCC BAA-471 / A3(2) / M145)).